The following is a 565-amino-acid chain: NAD-dependent malic enzyme (565 aa).

The active-site Proton donor is Tyr-104. Arg-157 is an NAD(+) binding site. Lys-175 serves as the catalytic Proton acceptor. Glu-246, Asp-247, and Asp-270 together coordinate a divalent metal cation. Positions 270 and 418 each coordinate NAD(+).

This sequence belongs to the malic enzymes family. In terms of assembly, homotetramer. It depends on Mg(2+) as a cofactor. Requires Mn(2+) as cofactor.

The catalysed reaction is (S)-malate + NAD(+) = pyruvate + CO2 + NADH. The enzyme catalyses oxaloacetate + H(+) = pyruvate + CO2. The chain is NAD-dependent malic enzyme from Shigella sonnei (strain Ss046).